We begin with the raw amino-acid sequence, 66 residues long: Alpha-conotoxin RegIIA (66 aa).

The first 21 residues, 1–21 (MGMRMMFTVFLLVVLTTTVVS), serve as a signal peptide directing secretion. Positions 22 to 49 (STSVRASDGRNAAADNRASDLIAQIVRR) are excised as a propeptide. 2 cysteine pairs are disulfide-bonded: Cys51/Cys57 and Cys52/Cys65. The ser-Xaa-Pro motif, crucial for potent interaction with nAChR stretch occupies residues 53-55 (SHP). The residue at position 65 (Cys65) is a Cysteine amide.

Belongs to the conotoxin A superfamily. As to expression, expressed by the venom duct.

The protein resides in the secreted. Alpha-conotoxins act on postsynaptic membranes, they bind to the nicotinic acetylcholine receptors (nAChR) and thus inhibit them. This toxin potently inhibits alpha-3 containing subunit nAChR. It inhibits alpha-3-beta-2/CHRNA3-CHRNB2 (IC(50)=10.7-33 nM (rat)/132.4-704.1 nM (human)) and alpha-3-beta-4/CHRNA3-CHRNB4 (IC(50)=47.3-97 nM (rat)/52.1 nM (human)). It also inhibits alpha-7/CHRNA7 nAChR with IC(50)=103-210 nM (human)/41-61.2 nM (rat) nAChRs. It is more potent on alpha-3-beta-2 receptors in human than in rat, due to a variation (Pro vs Gln) in alpha-3 subunit in these orthologs. Conversely, does not show species-specific differences in sensitivity at the alpha-3-beta-4 receptor. This chain is Alpha-conotoxin RegIIA, found in Conus regius (Crown cone).